The sequence spans 348 residues: Protein RecA (348 aa).

An ATP-binding site is contributed by 64-71 (GPESSGKT). Basic and acidic residues predominate over residues 325 to 335 (YEIDGASKEPL). Positions 325 to 348 (YEIDGASKEPLEETEETLSLLDDE) are disordered. A compositionally biased stretch (acidic residues) spans 336 to 348 (EETEETLSLLDDE).

This sequence belongs to the RecA family.

The protein localises to the cytoplasm. Functionally, can catalyze the hydrolysis of ATP in the presence of single-stranded DNA, the ATP-dependent uptake of single-stranded DNA by duplex DNA, and the ATP-dependent hybridization of homologous single-stranded DNAs. It interacts with LexA causing its activation and leading to its autocatalytic cleavage. This chain is Protein RecA, found in Listeria seeligeri.